The following is a 286-amino-acid chain: Putative electron transfer flavoprotein subunit YgcQ (286 aa).

225-253 contacts FAD; that stretch reads VCIVVGASGAAALMAGVRNSKFVVAINHD.

It belongs to the ETF alpha-subunit/FixB family. As to quaternary structure, ygcQ and YgcR form a heterodimer.

In terms of biological role, may play a role in a redox process. The sequence is that of Putative electron transfer flavoprotein subunit YgcQ (ygcQ) from Escherichia coli (strain K12).